The primary structure comprises 329 residues: DNA-directed RNA polymerase subunit alpha (329 aa).

The segment at 1–235 is alpha N-terminal domain (alpha-NTD); the sequence is MQGSVTEFLK…EQLDAFVDLR (235 aa). The tract at residues 249–329 is alpha C-terminal domain (alpha-CTD); it reads FDPILLRPVD…NWPPASIAED (81 aa).

It belongs to the RNA polymerase alpha chain family. Homodimer. The RNAP catalytic core consists of 2 alpha, 1 beta, 1 beta' and 1 omega subunit. When a sigma factor is associated with the core the holoenzyme is formed, which can initiate transcription.

It catalyses the reaction RNA(n) + a ribonucleoside 5'-triphosphate = RNA(n+1) + diphosphate. DNA-dependent RNA polymerase catalyzes the transcription of DNA into RNA using the four ribonucleoside triphosphates as substrates. In Actinobacillus succinogenes (strain ATCC 55618 / DSM 22257 / CCUG 43843 / 130Z), this protein is DNA-directed RNA polymerase subunit alpha.